A 112-amino-acid chain; its full sequence is SRA stem-loop-interacting RNA-binding protein, mitochondrial (112 aa).

At S15 the chain carries Phosphoserine. In terms of domain architecture, RRM spans 19 to 98 (PIAFVRKIPW…IHVQAQRAKA (80 aa)). T104 carries the post-translational modification Phosphothreonine. S105 carries the post-translational modification Phosphoserine.

Its subcellular location is the mitochondrion. The protein localises to the nucleus. Its function is as follows. RNA-binding protein that acts as a nuclear receptor corepressor. Probably acts by binding the SRA RNA, and repressing the SRA-mediated nuclear receptor coactivation. Binds the STR7 loop of SRA RNA. Also able to repress glucocorticoid (GR), androgen (AR), thyroid (TR) and VDR-mediated transactivation. In Mus musculus (Mouse), this protein is SRA stem-loop-interacting RNA-binding protein, mitochondrial (Slirp).